Consider the following 251-residue polypeptide: Phosphoribosylaminoimidazole-succinocarboxamide synthase (251 aa).

The protein belongs to the SAICAR synthetase family.

It carries out the reaction 5-amino-1-(5-phospho-D-ribosyl)imidazole-4-carboxylate + L-aspartate + ATP = (2S)-2-[5-amino-1-(5-phospho-beta-D-ribosyl)imidazole-4-carboxamido]succinate + ADP + phosphate + 2 H(+). It participates in purine metabolism; IMP biosynthesis via de novo pathway; 5-amino-1-(5-phospho-D-ribosyl)imidazole-4-carboxamide from 5-amino-1-(5-phospho-D-ribosyl)imidazole-4-carboxylate: step 1/2. In Phenylobacterium zucineum (strain HLK1), this protein is Phosphoribosylaminoimidazole-succinocarboxamide synthase.